Here is a 177-residue protein sequence, read N- to C-terminus: Large ribosomal subunit protein uL6 (177 aa).

It belongs to the universal ribosomal protein uL6 family. As to quaternary structure, part of the 50S ribosomal subunit.

This protein binds to the 23S rRNA, and is important in its secondary structure. It is located near the subunit interface in the base of the L7/L12 stalk, and near the tRNA binding site of the peptidyltransferase center. In Aeromonas salmonicida (strain A449), this protein is Large ribosomal subunit protein uL6.